The primary structure comprises 288 residues: Protein PGR (288 aa).

Helical transmembrane passes span 1–21 (METS…LIAF), 29–49 (LDLS…TAGF), 91–111 (VLCN…LTGW), 123–143 (IVTA…GDTW), 177–197 (LLAA…FGLF), 210–230 (LLVI…DSIL), and 268–288 (VNFV…VYIF).

This sequence belongs to the TMEM19 family. In terms of tissue distribution, expressed in the vasculature of leaves, roots, inflorescences, siliques, anther filaments and sepals. Detected primarily in the phloem tissues, including in the root ans shoot apical meristems.

It localises to the cell membrane. Functionally, involved in the glucose-triggered developmental leaf growth process. The polypeptide is Protein PGR (Arabidopsis thaliana (Mouse-ear cress)).